The following is a 146-amino-acid chain: Hemoglobin subunit beta (146 aa).

The Globin domain occupies 2-146 (HWSAEEKQLI…VAHALARKYH (145 aa)). Heme b is bound by residues His-63 and His-92.

Belongs to the globin family. Heterotetramer of two alpha chains and two beta chains. Red blood cells.

Its function is as follows. Involved in oxygen transport from the lung to the various peripheral tissues. The polypeptide is Hemoglobin subunit beta (HBB) (Columba livia (Rock dove)).